The following is a 529-amino-acid chain: Bifunctional purine biosynthesis protein PurH (529 aa).

Positions 1–148 (MQQRRPVRRA…KNHKDVAIVV (148 aa)) constitute an MGS-like domain.

The protein belongs to the PurH family.

It catalyses the reaction (6R)-10-formyltetrahydrofolate + 5-amino-1-(5-phospho-beta-D-ribosyl)imidazole-4-carboxamide = 5-formamido-1-(5-phospho-D-ribosyl)imidazole-4-carboxamide + (6S)-5,6,7,8-tetrahydrofolate. It carries out the reaction IMP + H2O = 5-formamido-1-(5-phospho-D-ribosyl)imidazole-4-carboxamide. It functions in the pathway purine metabolism; IMP biosynthesis via de novo pathway; 5-formamido-1-(5-phospho-D-ribosyl)imidazole-4-carboxamide from 5-amino-1-(5-phospho-D-ribosyl)imidazole-4-carboxamide (10-formyl THF route): step 1/1. It participates in purine metabolism; IMP biosynthesis via de novo pathway; IMP from 5-formamido-1-(5-phospho-D-ribosyl)imidazole-4-carboxamide: step 1/1. The polypeptide is Bifunctional purine biosynthesis protein PurH (Salmonella agona (strain SL483)).